Here is a 438-residue protein sequence, read N- to C-terminus: Asparagine--tRNA ligase (438 aa).

It belongs to the class-II aminoacyl-tRNA synthetase family. Homodimer.

The protein resides in the cytoplasm. It carries out the reaction tRNA(Asn) + L-asparagine + ATP = L-asparaginyl-tRNA(Asn) + AMP + diphosphate + H(+). The sequence is that of Asparagine--tRNA ligase from Thermus thermophilus (strain ATCC 27634 / DSM 579 / HB8).